The chain runs to 201 residues: LexA repressor (201 aa).

A DNA-binding region (H-T-H motif) is located at residues 29–49; sequence VREICKAVGLSSTSSVHFHLK. Catalysis depends on for autocatalytic cleavage activity residues Ser-125 and Lys-162.

It belongs to the peptidase S24 family. In terms of assembly, homodimer.

The enzyme catalyses Hydrolysis of Ala-|-Gly bond in repressor LexA.. Functionally, represses a number of genes involved in the response to DNA damage (SOS response), including recA and lexA. In the presence of single-stranded DNA, RecA interacts with LexA causing an autocatalytic cleavage which disrupts the DNA-binding part of LexA, leading to derepression of the SOS regulon and eventually DNA repair. The sequence is that of LexA repressor from Clostridium botulinum (strain ATCC 19397 / Type A).